A 576-amino-acid polypeptide reads, in one-letter code: A-type ATP synthase subunit A (576 aa).

228 to 235 lines the ATP pocket; it reads GGFGTGKT.

It belongs to the ATPase alpha/beta chains family. Has multiple subunits with at least A(3), B(3), C, D, E, F, H, I and proteolipid K(x).

Its subcellular location is the cell membrane. It carries out the reaction ATP + H2O + 4 H(+)(in) = ADP + phosphate + 5 H(+)(out). Component of the A-type ATP synthase that produces ATP from ADP in the presence of a proton gradient across the membrane. The A chain is the catalytic subunit. The sequence is that of A-type ATP synthase subunit A from Methanothrix thermoacetophila (strain DSM 6194 / JCM 14653 / NBRC 101360 / PT) (Methanosaeta thermophila).